We begin with the raw amino-acid sequence, 566 residues long: Glucose-6-phosphate isomerase, cytosolic (566 aa).

Catalysis depends on glutamate 360, which acts as the Proton donor. Residues histidine 391 and lysine 516 contribute to the active site.

This sequence belongs to the GPI family. In terms of assembly, homodimer.

It localises to the cytoplasm. The enzyme catalyses alpha-D-glucose 6-phosphate = beta-D-fructose 6-phosphate. Its pathway is carbohydrate degradation; glycolysis; D-glyceraldehyde 3-phosphate and glycerone phosphate from D-glucose: step 2/4. In Spinacia oleracea (Spinach), this protein is Glucose-6-phosphate isomerase, cytosolic (PGIC).